Reading from the N-terminus, the 209-residue chain is Redox-sensing transcriptional repressor Rex (209 aa).

Positions 16 to 55 (LYYRFIQNLSLSGKQRVSSAELSEAVKVDSATIRRDFSYF) form a DNA-binding region, H-T-H motif. An NAD(+)-binding site is contributed by 90–95 (GVGNLG).

The protein belongs to the transcriptional regulatory Rex family. In terms of assembly, homodimer.

Its subcellular location is the cytoplasm. Its function is as follows. Modulates transcription in response to changes in cellular NADH/NAD(+) redox state. The protein is Redox-sensing transcriptional repressor Rex of Bacillus cereus (strain AH187).